A 489-amino-acid chain; its full sequence is Glutamyl-tRNA(Gln) amidotransferase subunit A (489 aa).

Active-site charge relay system residues include Lys-80 and Ser-160. The active-site Acyl-ester intermediate is Ser-184.

The protein belongs to the amidase family. GatA subfamily. Heterotrimer of A, B and C subunits.

The enzyme catalyses L-glutamyl-tRNA(Gln) + L-glutamine + ATP + H2O = L-glutaminyl-tRNA(Gln) + L-glutamate + ADP + phosphate + H(+). Allows the formation of correctly charged Gln-tRNA(Gln) through the transamidation of misacylated Glu-tRNA(Gln) in organisms which lack glutaminyl-tRNA synthetase. The reaction takes place in the presence of glutamine and ATP through an activated gamma-phospho-Glu-tRNA(Gln). The sequence is that of Glutamyl-tRNA(Gln) amidotransferase subunit A from Wolbachia sp. subsp. Drosophila simulans (strain wRi).